The following is a 299-amino-acid chain: MMLIPTHHFRNIERKPEYLQPEKCVPPPYPGPVGTMWFIRDGCGIACAIVTWFLVLYAEFVVLFVMLIPSRDYVYSIINGIVFNLLAFLALASHCRAMLTDPGAVPKGNATKEFIESLQLKPGQVVYKCPKCCSIKPDRAHHCSVCKRCIRKMDHHCPWVNNCVGENNQKYFVLFTMYIALISLHALIMVGFHFLHCFEEDWTKCSSFSPPTTVILLILLCFEGLLFLIFTSVMFGTQVHSICTDETGIEQLKKEERRWAKKTKWMNMKAVFGHPFSLGWASPFATPDQGKADPYQYVV.

Residues 1-47 (MMLIPTHHFRNIERKPEYLQPEKCVPPPYPGPVGTMWFIRDGCGIAC) are Cytoplasmic-facing. At tyrosine 18 the chain carries Phosphotyrosine. Residues 48–68 (AIVTWFLVLYAEFVVLFVMLI) form a helical membrane-spanning segment. The Extracellular portion of the chain corresponds to 69-72 (PSRD). Residues 73–93 (YVYSIINGIVFNLLAFLALAS) form a helical membrane-spanning segment. The Cytoplasmic segment spans residues 94–171 (HCRAMLTDPG…NCVGENNQKY (78 aa)). Positions 127–177 (YKCPKCCSIKPDRAHHCSVCKRCIRKMDHHCPWVNNCVGENNQKYFVLFTM) constitute a DHHC domain. Cysteine 146 carries the S-palmitoyl cysteine lipid modification. Cysteine 157 acts as the S-palmitoyl cysteine intermediate in catalysis. A helical transmembrane segment spans residues 172-192 (FVLFTMYIALISLHALIMVGF). Topologically, residues 193–214 (HFLHCFEEDWTKCSSFSPPTTV) are extracellular. Residues 215–235 (ILLILLCFEGLLFLIFTSVMF) traverse the membrane as a helical segment. At 236–299 (GTQVHSICTD…GKADPYQYVV (64 aa)) the chain is on the cytoplasmic side.

Belongs to the DHHC palmitoyltransferase family. In terms of assembly, monomer. Homooligomers. The monomeric form has a higher catalytic activity. Forms heterooligomers with ZDHHC7. Interacts with TNFRSF10A. In terms of processing, autopalmitoylated. Phosphorylation by FGFR1 and SRC probably regulates the palmitoyltransferase activity. Widely expressed with significant expression in heart, lung, liver, skeletal muscle, kidney, testis, thymus, small intestine and leukocyte.

The protein resides in the golgi apparatus membrane. It catalyses the reaction L-cysteinyl-[protein] + hexadecanoyl-CoA = S-hexadecanoyl-L-cysteinyl-[protein] + CoA. The enzyme catalyses L-cysteinyl-[protein] + tetradecanoyl-CoA = S-tetradecanoyl-L-cysteinyl-[protein] + CoA. It carries out the reaction L-cysteinyl-[protein] + octadecanoyl-CoA = S-octadecanoyl-L-cysteinyl-[protein] + CoA. Functionally, golgi-localized palmitoyltransferase that catalyzes the addition of palmitate onto various protein substrates. Has no stringent fatty acid selectivity and in addition to palmitate can also transfer onto target proteins myristate from tetradecanoyl-CoA and stearate from octadecanoyl-CoA. Plays an important role in G protein-coupled receptor signaling pathways involving GNAQ and potentially other heterotrimeric G proteins by regulating their dynamic association with the plasma membrane. Palmitoylates ITGA6 and ITGB4, thereby regulating the alpha-6/beta-4 integrin localization, expression and function in cell adhesion to laminin. Plays a role in the TRAIL-activated apoptotic signaling pathway most probably through the palmitoylation and localization to the plasma membrane of TNFRSF10A. In the brain, by palmitoylating the gamma subunit GABRG2 of GABA(A) receptors and regulating their postsynaptic accumulation, plays a role in synaptic GABAergic inhibitory function and GABAergic innervation. Palmitoylates the neuronal protein GAP43 which is also involved in the formation of GABAergic synapses. Palmitoylates NCDN thereby regulating its association with endosome membranes. Probably palmitoylates PRCD and is involved in its proper localization within the photoreceptor. Could mediate the palmitoylation of NCAM1 and regulate neurite outgrowth. Could palmitoylate DNAJC5 and regulate its localization to Golgi membranes. Also constitutively palmitoylates DLG4. May also palmitoylate SNAP25. Could palmitoylate the glutamate receptors GRIA1 and GRIA2 but this has not been confirmed in vivo. Could also palmitoylate the D(2) dopamine receptor DRD2. May also palmitoylate LAMTOR1, promoting its localization to lysosomal membranes. Palmitoylates the Toll-like receptor 9/TLR9 in the Golgi and thereby regulates TLR9 trafficking to endosomes. May palmitoylate CALHM1 and CALHM3 subunits of gustatory voltage-gated ion channels and modulate channel gating and kinetics. May also function as a calcium transporter. In Homo sapiens (Human), this protein is Palmitoyltransferase ZDHHC3.